The following is a 648-amino-acid chain: 1-deoxy-D-xylulose-5-phosphate synthase 1 (648 aa).

Thiamine diphosphate contacts are provided by residues His82 and 123–125 (AHS). Residue Asp154 participates in Mg(2+) binding. Thiamine diphosphate contacts are provided by residues 155–156 (GS), Asn183, Tyr292, and Glu374. A Mg(2+)-binding site is contributed by Asn183.

The protein belongs to the transketolase family. DXPS subfamily. Homodimer. Mg(2+) is required as a cofactor. Thiamine diphosphate serves as cofactor.

It carries out the reaction D-glyceraldehyde 3-phosphate + pyruvate + H(+) = 1-deoxy-D-xylulose 5-phosphate + CO2. It functions in the pathway metabolic intermediate biosynthesis; 1-deoxy-D-xylulose 5-phosphate biosynthesis; 1-deoxy-D-xylulose 5-phosphate from D-glyceraldehyde 3-phosphate and pyruvate: step 1/1. In terms of biological role, catalyzes the acyloin condensation reaction between C atoms 2 and 3 of pyruvate and glyceraldehyde 3-phosphate to yield 1-deoxy-D-xylulose-5-phosphate (DXP). The sequence is that of 1-deoxy-D-xylulose-5-phosphate synthase 1 from Cereibacter sphaeroides (strain ATCC 17023 / DSM 158 / JCM 6121 / CCUG 31486 / LMG 2827 / NBRC 12203 / NCIMB 8253 / ATH 2.4.1.) (Rhodobacter sphaeroides).